Here is an 81-residue protein sequence, read N- to C-terminus: Protein GPR15LG (81 aa).

The N-terminal stretch at 1–24 is a signal peptide; that stretch reads MRFLALTSLLCILLLCLSFFSAEG. 2 cysteine pairs are disulfide-bonded: cysteine 40/cysteine 63 and cysteine 41/cysteine 60.

Interacts with SUSD2; the interaction is direct.

The protein localises to the secreted. Highly cationic protein that has multiple functions. Acts as a chemotactic factor that mediates lymphocytes recruitment to epithelia through binding and activation of the G-protein coupled receptor GPR15. May be a tumor suppressor; together with SUSD2 has a growth inhibitory effect on colon cancer cells which includes G1 cell cycle arrest. May regulate keratinocyte proliferation. In addition, through activation of Mas-related G protein-coupled receptors (MRGPRs) contributes to pruritogenesis by activating itch-selective sensory neurons and mast cells degranulation. Functionally, has antimicrobial activity against Gram-positive bacteria, including Staphylococcus aureus and Actinomyces spec., and Mycoplasma hominis and lentivirus. In Sus scrofa (Pig), this protein is Protein GPR15LG (GPR15LG).